Consider the following 2555-residue polypeptide: MPPLLAPLLCLALLPALAARGPRCSQPGETCLNGGKCEAANGTEACVCGGAFVGPRCQDPNPCLSTPCKNAGTCHVVDRRGVADYACSCALGFSGPLCLTPLDNACLTNPCRNGGTCDLLTLTEYKCRCPPGWSGKSCQQADPCASNPCANGGQCLPFEASYICHCPPSFHGPTCRQDVNECGQKPGLCRHGGTCHNEVGSYRCVCRATHTGPNCERPYVPCSPSPCQNGGTCRPTGDVTHECACLPGFTGQNCEENIDDCPGNNCKNGGACVDGVNTYNCRCPPEWTGQYCTEDVDECQLMPNACQNGGTCHNTHGGYNCVCVNGWTGEDCSENIDDCASAACFHGATCHDRVASFYCECPHGRTGLLCHLNDACISNPCNEGSNCDTNPVNGKAICTCPSGYTGPACSQDVDECSLGANPCEHAGKCINTLGSFECQCLQGYTGPRCEIDVNECVSNPCQNDATCLDQIGEFQCICMPGYEGVHCEVNTDECASSPCLHNGRCLDKINEFQCECPTGFTGHLCQYDVDECASTPCKNGAKCLDGPNTYTCVCTEGYTGTHCEVDIDECDPDPCHYGSCKDGVATFTCLCRPGYTGHHCETNINECSSQPCRHGGTCQDRDNAYLCFCLKGTTGPNCEINLDDCASSPCDSGTCLDKIDGYECACEPGYTGSMCNINIDECAGNPCHNGGTCEDGINGFTCRCPEGYHDPTCLSEVNECNSNPCVHGACRDSLNGYKCDCDPGWSGTNCDINNNECESNPCVNGGTCKDMTSGYVCTCREGFSGPNCQTNINECASNPCLNQGTCIDDVAGYKCNCLLPYTGATCEVVLAPCAPSPCRNGGECRQSEDYESFSCVCPTGWQGQTCEVDINECVLSPCRHGASCQNTHGGYRCHCQAGYSGRNCETDIDDCRPNPCHNGGSCTDGINTAFCDCLPGFRGTFCEEDINECASDPCRNGANCTDCVDSYTCTCPAGFSGIHCENNTPDCTESSCFNGGTCVDGINSFTCLCPPGFTGSYCQHDVNECDSQPCLHGGTCQDGCGSYRCTCPQGYTGPNCQNLVHWCDSSPCKNGGKCWQTHTQYRCECPSGWTGLYCDVPSVSCEVAAQRQGVDVARLCQHGGLCVDAGNTHHCRCQAGYTGSYCEDLVDECSPSPCQNGATCTDYLGGYSCKCVAGYHGVNCSEEIDECLSHPCQNGGTCLDLPNTYKCSCPRGTQGVHCEINVDDCNPPVDPVSRSPKCFNNGTCVDQVGGYSCTCPPGFVGERCEGDVNECLSNPCDARGTQNCVQRVNDFHCECRAGHTGRRCESVINGCKGKPCKNGGTCAVASNTARGFICKCPAGFEGATCENDARTCGSLRCLNGGTCISGPRSPTCLCLGPFTGPECQFPASSPCLGGNPCYNQGTCEPTSESPFYRCLCPAKFNGLLCHILDYSFGGGAGRDIPPPLIEEACELPECQEDAGNKVCSLQCNNHACGWDGGDCSLNFNDPWKNCTQSLQCWKYFSDGHCDSQCNSAGCLFDGFDCQRAEGQCNPLYDQYCKDHFSDGHCDQGCNSAECEWDGLDCAEHVPERLAAGTLVVVVLMPPEQLRNSSFHFLRELSRVLHTNVVFKRDAHGQQMIFPYYGREEELRKHPIKRAAEGWAAPDALLGQVKASLLPGGSEGGRRRRELDPMDVRGSIVYLEIDNRQCVQASSQCFQSATDVAAFLGALASLGSLNIPYKIEAVQSETVEPPPPAQLHFMYVAAAAFVLLFFVGCGVLLSRKRRRQHGQLWFPEGFKVSEASKKKRREPLGEDSVGLKPLKNASDGALMDDNQNEWGDEDLETKKFRFEEPVVLPDLDDQTDHRQWTQQHLDAADLRMSAMAPTPPQGEVDADCMDVNVRGPDGFTPLMIASCSGGGLETGNSEEEEDAPAVISDFIYQGASLHNQTDRTGETALHLAARYSRSDAAKRLLEASADANIQDNMGRTPLHAAVSADAQGVFQILIRNRATDLDARMHDGTTPLILAARLAVEGMLEDLINSHADVNAVDDLGKSALHWAAAVNNVDAAVVLLKNGANKDMQNNREETPLFLAAREGSYETAKVLLDHFANRDITDHMDRLPRDIAQERMHHDIVRLLDEYNLVRSPQLHGAPLGGTPTLSPPLCSPNGYLGSLKPGVQGKKVRKPSSKGLACGSKEAKDLKARRKKSQDGKGCLLDSSGMLSPVDSLESPHGYLSDVASPPLLPSPFQQSPSVPLNHLPGMPDTHLGIGHLNVAAKPEMAALGGGGRLAFETGPPRLSHLPVASGTSTVLGSSSGGALNFTVGGSTSLNGQCEWLSRLQSGMVPNQYNPLRGSVAPGPLSTQAPSLQHGMVGPLHSSLAASALSQMMSYQGLPSTRLATQPHLVQTQQVQPQNLQMQQQNLQPANIQQQQSLQPPPPPPQPHLGVSSAASGHLGRSFLSGEPSQADVQPLGPSSLAVHTILPQESPALPTSLPSSLVPPVTAAQFLTPPSQHSYSSPVDNTPSHQLQVPEHPFLTPSPESPDQWSSSSPHSNVSDWSEGVSSPPTSMQSQIARIPEAFK.

The first 18 residues, 1–18, serve as a signal peptide directing secretion; that stretch reads MPPLLAPLLCLALLPALA. Residues 19-1735 are Extracellular-facing; sequence ARGPRCSQPG…VEPPPPAQLH (1717 aa). EGF-like domains lie at 20-58, 59-99, 102-139, and 140-176; these read RGPR…PRCQ, DPNP…PLCL, LDNA…KSCQ, and QADP…PTCR. 33 cysteine pairs are disulfide-bonded: cysteine 24–cysteine 37, cysteine 31–cysteine 46, cysteine 48–cysteine 57, cysteine 63–cysteine 74, cysteine 68–cysteine 87, cysteine 89–cysteine 98, cysteine 106–cysteine 117, cysteine 111–cysteine 127, cysteine 129–cysteine 138, cysteine 144–cysteine 155, cysteine 149–cysteine 164, cysteine 166–cysteine 175, cysteine 182–cysteine 195, cysteine 189–cysteine 204, cysteine 206–cysteine 215, cysteine 222–cysteine 233, cysteine 227–cysteine 243, cysteine 245–cysteine 254, cysteine 261–cysteine 272, cysteine 266–cysteine 281, cysteine 283–cysteine 292, cysteine 299–cysteine 312, cysteine 306–cysteine 321, cysteine 323–cysteine 332, cysteine 339–cysteine 350, cysteine 344–cysteine 359, cysteine 361–cysteine 370, cysteine 376–cysteine 387, cysteine 381–cysteine 398, cysteine 400–cysteine 409, cysteine 416–cysteine 429, cysteine 423–cysteine 438, and cysteine 440–cysteine 449. Asparagine 41 is a glycosylation site (N-linked (GlcNAc...) asparagine). O-linked (Glc...) serine glycosylation is present at serine 65. Threonine 73 is a glycosylation site (O-linked (Fuc...) threonine). Threonine 116 carries an O-linked (Fuc...) threonine glycan. Serine 146 carries O-linked (Glc...) serine glycosylation. The 39-residue stretch at 178-216 folds into the EGF-like 5; calcium-binding domain; sequence DVNECGQKPGLCRHGGTCHNEVGSYRCVCRATHTGPNCE. O-linked (Fuc...) threonine glycosylation is present at threonine 194. An EGF-like 6 domain is found at 218 to 255; sequence PYVPCSPSPCQNGGTCRPTGDVTHECACLPGFTGQNCE. Residue threonine 232 is glycosylated (O-linked (Fuc...) threonine; alternate). An O-linked (GalNAc...) threonine; alternate glycan is attached at threonine 232. An EGF-like 7; calcium-binding domain is found at 257–293; sequence NIDDCPGNNCKNGGACVDGVNTYNCRCPPEWTGQYCT. An EGF-like 8; calcium-binding domain is found at 295–333; that stretch reads DVDECQLMPNACQNGGTCHNTHGGYNCVCVNGWTGEDCS. O-linked (Fuc...) threonine glycosylation occurs at threonine 311. Residues 335–371 enclose the EGF-like 9; calcium-binding domain; that stretch reads NIDDCASAACFHGATCHDRVASFYCECPHGRTGLLCH. An O-linked (Glc...) serine glycan is attached at serine 341. An O-linked (Fuc...) threonine glycan is attached at threonine 349. Residues 372–410 form the EGF-like 10 domain; the sequence is LNDACISNPCNEGSNCDTNPVNGKAICTCPSGYTGPACS. O-linked (Glc...) serine glycosylation is present at serine 378. The EGF-like 11; calcium-binding domain maps to 412-450; the sequence is DVDECSLGANPCEHAGKCINTLGSFECQCLQGYTGPRCE. The tract at residues 420–421 is interaction with DLL4; the sequence is AN. Threonine 432 and serine 435 together coordinate Ca(2+). Residue serine 435 is glycosylated (O-linked (Glc...) serine). Residues 448-452 are interaction with DLL4; sequence RCEID. Positions 452, 453, and 455 each coordinate Ca(2+). The region spanning 452–488 is the EGF-like 12; calcium-binding domain; it reads DVNECVSNPCQNDATCLDQIGEFQCICMPGYEGVHCE. 3 disulfides stabilise this stretch: cysteine 456-cysteine 467, cysteine 461-cysteine 476, and cysteine 478-cysteine 487. The O-linked (Glc...) serine glycan is linked to serine 458. Threonine 466 is a glycosylation site (O-linked (Fuc...) threonine). Ca(2+) is bound by residues aspartate 469 and glutamine 470. Residues asparagine 490, threonine 491, and glutamate 493 each contribute to the Ca(2+) site. The EGF-like 13; calcium-binding domain maps to 490–526; it reads NTDECASSPCLHNGRCLDKINEFQCECPTGFTGHLCQ. Cystine bridges form between cysteine 494–cysteine 505, cysteine 499–cysteine 514, cysteine 516–cysteine 525, cysteine 532–cysteine 543, cysteine 537–cysteine 552, cysteine 554–cysteine 563, cysteine 570–cysteine 580, cysteine 575–cysteine 589, cysteine 591–cysteine 600, cysteine 607–cysteine 618, cysteine 612–cysteine 627, cysteine 629–cysteine 638, cysteine 645–cysteine 655, cysteine 650–cysteine 664, cysteine 666–cysteine 675, cysteine 682–cysteine 693, cysteine 687–cysteine 702, cysteine 704–cysteine 713, cysteine 720–cysteine 730, cysteine 725–cysteine 739, cysteine 741–cysteine 750, cysteine 757–cysteine 768, cysteine 762–cysteine 777, cysteine 779–cysteine 788, cysteine 795–cysteine 806, cysteine 800–cysteine 815, cysteine 817–cysteine 826, cysteine 833–cysteine 844, cysteine 838–cysteine 855, cysteine 857–cysteine 866, cysteine 873–cysteine 884, cysteine 878–cysteine 893, cysteine 895–cysteine 904, cysteine 911–cysteine 922, cysteine 916–cysteine 931, cysteine 933–cysteine 942, cysteine 949–cysteine 960, cysteine 954–cysteine 969, cysteine 971–cysteine 980, cysteine 987–cysteine 998, cysteine 992–cysteine 1007, cysteine 1009–cysteine 1018, cysteine 1025–cysteine 1036, cysteine 1030–cysteine 1045, cysteine 1047–cysteine 1056, cysteine 1063–cysteine 1074, cysteine 1068–cysteine 1083, cysteine 1085–cysteine 1094, cysteine 1101–cysteine 1122, cysteine 1116–cysteine 1131, cysteine 1133–cysteine 1142, cysteine 1149–cysteine 1160, cysteine 1154–cysteine 1169, cysteine 1171–cysteine 1180, cysteine 1187–cysteine 1198, cysteine 1192–cysteine 1207, cysteine 1209–cysteine 1218, cysteine 1238–cysteine 1253, cysteine 1255–cysteine 1264, cysteine 1271–cysteine 1284, cysteine 1276–cysteine 1293, cysteine 1295–cysteine 1304, cysteine 1311–cysteine 1322, cysteine 1316–cysteine 1334, cysteine 1336–cysteine 1345, cysteine 1352–cysteine 1363, cysteine 1357–cysteine 1372, cysteine 1374–cysteine 1383, cysteine 1391–cysteine 1403, cysteine 1397–cysteine 1414, cysteine 1416–cysteine 1425, cysteine 1449–cysteine 1472, cysteine 1454–cysteine 1467, and cysteine 1463–cysteine 1479. An O-linked (Glc...) serine glycan is attached at serine 496. Ca(2+) contacts are provided by aspartate 507 and lysine 508. Residues 528-564 form the EGF-like 14; calcium-binding domain; sequence DVDECASTPCKNGAKCLDGPNTYTCVCTEGYTGTHCE. A glycan (O-linked (Glc...) serine) is linked at serine 534. An EGF-like 15; calcium-binding domain is found at 566 to 601; it reads DIDECDPDPCHYGSCKDGVATFTCLCRPGYTGHHCE. The 37-residue stretch at 603–639 folds into the EGF-like 16; calcium-binding domain; that stretch reads NINECSSQPCRHGGTCQDRDNAYLCFCLKGTTGPNCE. A glycan (O-linked (Glc...) serine) is linked at serine 609. Threonine 617 carries O-linked (Fuc...) threonine glycosylation. The EGF-like 17; calcium-binding domain maps to 641–676; the sequence is NLDDCASSPCDSGTCLDKIDGYECACEPGYTGSMCN. O-linked (Glc...) serine glycosylation occurs at serine 647. The 37-residue stretch at 678–714 folds into the EGF-like 18; calcium-binding domain; it reads NIDECAGNPCHNGGTCEDGINGFTCRCPEGYHDPTCL. O-linked (Fuc...) threonine glycosylation is present at threonine 692. An EGF-like 19; calcium-binding domain is found at 716–751; that stretch reads EVNECNSNPCVHGACRDSLNGYKCDCDPGWSGTNCD. Residue serine 722 is glycosylated (O-linked (Glc...) serine). The EGF-like 20 domain maps to 753 to 789; that stretch reads NNNECESNPCVNGGTCKDMTSGYVCTCREGFSGPNCQ. O-linked (Glc...) serine glycosylation occurs at serine 759. Threonine 767 is a glycosylation site (O-linked (Fuc...) threonine). O-linked (GlcNAc) serine glycosylation occurs at serine 784. In terms of domain architecture, EGF-like 21; calcium-binding spans 791-827; that stretch reads NINECASNPCLNQGTCIDDVAGYKCNCLLPYTGATCE. The O-linked (Glc...) serine glycan is linked to serine 797. O-linked (Fuc...) threonine glycosylation is present at threonine 805. Positions 829 to 867 constitute an EGF-like 22 domain; sequence VLAPCAPSPCRNGGECRQSEDYESFSCVCPTGWQGQTCE. An EGF-like 23; calcium-binding domain is found at 869–905; sequence DINECVLSPCRHGASCQNTHGGYRCHCQAGYSGRNCE. Residues 907–943 form the EGF-like 24 domain; sequence DIDDCRPNPCHNGGSCTDGINTAFCDCLPGFRGTFCE. A glycan (O-linked (Fuc) serine) is linked at serine 921. The 37-residue stretch at 945-981 folds into the EGF-like 25; calcium-binding domain; that stretch reads DINECASDPCRNGANCTDCVDSYTCTCPAGFSGIHCE. Serine 951 is a glycosylation site (O-linked (Glc...) serine). Residue asparagine 959 is glycosylated (N-linked (GlcNAc...) asparagine). EGF-like domains are found at residues 983 to 1019, 1021 to 1057, 1059 to 1095, 1097 to 1143, and 1145 to 1181; these read NTPD…SYCQ, DVNE…PNCQ, LVHW…LYCD, PSVS…SYCE, and LVDE…VNCS. Residue threonine 997 is glycosylated (O-linked (Fuc...) threonine). Serine 1027 carries O-linked (Glc...) serine glycosylation. An O-linked (Fuc...) threonine glycan is attached at threonine 1035. Serine 1065 carries O-linked (Glc...) serine glycosylation. O-linked (Fuc...) threonine glycosylation is present at threonine 1159. N-linked (GlcNAc...) asparagine glycosylation occurs at asparagine 1179. Residues 1183-1219 enclose the EGF-like 31; calcium-binding domain; it reads EIDECLSHPCQNGGTCLDLPNTYKCSCPRGTQGVHCE. An O-linked (Glc...) serine glycan is attached at serine 1189. Residue threonine 1197 is glycosylated (O-linked (Fuc...) threonine). Positions 1221 to 1265 constitute an EGF-like 32; calcium-binding domain; the sequence is NVDDCNPPVDPVSRSPKCFNNGTCVDQVGGYSCTCPPGFVGERCE. Asparagine 1241 is a glycosylation site (N-linked (GlcNAc...) asparagine). EGF-like domains are found at residues 1267 to 1305, 1307 to 1346, 1348 to 1384, and 1387 to 1426; these read DVNE…RRCE, VING…ATCE, DART…PECQ, and ASSP…LLCH. An O-linked (Glc...) serine glycan is attached at serine 1273. O-linked (Fuc...) threonine glycosylation occurs at threonine 1362. Threonine 1379 carries an O-linked (GlcNAc...) threonine glycan. O-linked (Fuc...) threonine; alternate glycosylation occurs at threonine 1402. The O-linked (GalNAc...) threonine; alternate glycan is linked to threonine 1402. LNR repeat units follow at residues 1449-1489, 1490-1531, and 1532-1571; these read CELP…PWKN, CTQS…CNPL, and YDQY…RLAA. The Ca(2+) site is built by aspartate 1457, asparagine 1460, aspartate 1475, and aspartate 1478. An N-linked (GlcNAc...) asparagine glycan is attached at asparagine 1489. Disulfide bonds link cysteine 1490–cysteine 1514, cysteine 1496–cysteine 1509, cysteine 1505–cysteine 1521, cysteine 1536–cysteine 1549, and cysteine 1545–cysteine 1561. Asparagine 1587 carries N-linked (GlcNAc...) asparagine glycosylation. O-linked (GalNAc...) threonine glycosylation is present at threonine 1725. Positions 1728-1760 are interaction with PSEN1; that stretch reads PPPPAQLHFMYVAAAAFVLLFFVGCGVLLSRKR. Residues 1736 to 1756 traverse the membrane as a helical segment; sequence FMYVAAAAFVLLFFVGCGVLL. Over 1757 to 2555 the chain is Cytoplasmic; sequence SRKRRRQHGQ…QIARIPEAFK (799 aa). Lysine 1759 participates in a covalent cross-link: Glycyl lysine isopeptide (Lys-Gly) (interchain with G-Cter in ubiquitin). The interval 1780-1808 is disordered; sequence KKKRREPLGEDSVGLKPLKNASDGALMDD. The residue at position 1861 (threonine 1861) is a Phosphothreonine. 6 ANK repeats span residues 1927 to 1956, 1960 to 1990, 1994 to 2023, 2027 to 2056, 2060 to 2089, and 2095 to 2122; these read TGET…DANI, MGRT…DLDA, DGTT…DVNA, LGKS…NKDM, REET…NRDI, and RLPR…VRSP. Positions 1947 to 1955 are HIF1AN-binding; it reads LLEASADAN. Asparagine 1955 is modified ((3S)-3-hydroxyasparagine; by HIF1AN; partial). The segment at 2014–2022 is HIF1AN-binding; sequence LINSHADVN. Asparagine 2022 is modified ((3S)-3-hydroxyasparagine; by HIF1AN). Disordered regions lie at residues 2151-2194, 2379-2447, and 2483-2555; these read PGVQ…LDSS, LVQT…QPLG, and TPPS…EAFK. Low complexity predominate over residues 2379-2408; it reads LVQTQQVQPQNLQMQQQNLQPANIQQQQSL. The segment covering 2483–2502 has biased composition (polar residues); that stretch reads TPPSQHSYSSPVDNTPSHQL. Residues 2512–2527 show a composition bias toward low complexity; it reads PSPESPDQWSSSSPHS. Over residues 2528–2547 the composition is skewed to polar residues; that stretch reads NVSDWSEGVSSPPTSMQSQI.

It belongs to the NOTCH family. In terms of assembly, heterodimer of a C-terminal fragment N(TM) and an N-terminal fragment N(EC) which are probably linked by disulfide bonds. Interacts with DNER, DTX1, DTX2 and RBPJ/RBPSUH. Also interacts with MAML1, MAML2 and MAML3 which act as transcriptional coactivators for NOTCH1. The NOTCH1 intracellular domain interacts with SNW1; the interaction involves multimerized NOTCH1 NICD and is implicated in a formation of an intermediate preactivation complex which associates with DNA-bound CBF-1/RBPJ. The activated membrane-bound form interacts with AAK1 which promotes NOTCH1 stabilization. Forms a trimeric complex with FBXW7 and SGK1. Interacts with HIF1AN. HIF1AN negatively regulates the function of notch intracellular domain (NICD), accelerating myogenic differentiation. Interacts (via NICD) with SNAI1 (via zinc fingers); the interaction induces SNAI1 degradation via MDM2-mediated ubiquitination and inhibits SNAI1-induced cell invasion. Interacts (via NICD) with MDM2A. Interacts (via NICD) with BCL6; the interaction decreases MAML1 recruitment by NOTCH1 NICD on target genes DNA and inhibits NOTCH1 transactivation activity. Interacts with THBS4. Interacts (via the EGF-like repeat region) with CCN3 (via CTCK domain). Interacts (via EGF-like domains) with DLL4 (via N-terminal DSL and MNNL domains). Interacts with ZMIZ1. Interacts (via NICD domain) with MEGF10 (via the cytoplasmic domain). Interacts with DLL1 and JAG1. Interacts (via NICD domain) with PRAG1. Forms a complex with PRAG1, N1ICD and MAML1, in a MAML1-dependent manner. Interacts (via transmembrane region) with PSEN1; the interaction is direct. Interacts with ZFP64. Post-translationally, synthesized in the endoplasmic reticulum as an inactive form which is proteolytically cleaved by a furin-like convertase in the trans-Golgi network before it reaches the plasma membrane to yield an active, ligand-accessible form. Cleavage results in a C-terminal fragment N(TM) and a N-terminal fragment N(EC). Following ligand binding, it is cleaved by ADAM17 to yield a membrane-associated intermediate fragment called notch extracellular truncation (NEXT). Following endocytosis, this fragment is then cleaved by one of the catalytic subunits of gamma-secretase (PSEN1 or PSEN2), to release a Notch-derived peptide containing the intracellular domain (NICD) from the membrane. Phosphorylated. In terms of processing, O-glycosylated on the EGF-like domains. O-glucosylated at Ser-435 by KDELC1 and KDELC2. Contains both O-linked fucose and O-linked glucose in the EGF-like domains 11, 12 and 13, which are interacting with the residues on DLL4. O-linked glycosylation by GALNT11 is involved in determination of left/right symmetry: glycosylation promotes activation of NOTCH1, possibly by promoting cleavage by ADAM17, modulating the balance between motile and immotile (sensory) cilia at the left-right organiser (LRO). MFNG-, RFNG- and LFNG-mediated modification of O-fucose residues at specific EGF-like domains results in inhibition of its activation by JAG1 and enhancement of its activation by DLL1 via an increased binding to DLL1. Post-translationally, ubiquitinated. Undergoes 'Lys-29'-linked polyubiquitination by ITCH; promotes the lysosomal degradation of non-activated internalized NOTCH1. Deubiquitination by USP12 is required for transport of internalized non-activated receptor from late endosomes to lysosomes for degradation. Monoubiquitination at Lys-1759 is required for activation by gamma-secretase cleavage, it promotes interaction with AAK1, which stabilizes it. Deubiquitination by EIF3F is necessary for nuclear import of activated Notch. Hydroxylated at Asn-1955 by HIF1AN. Hydroxylated at Asn-2022 by HIF1AN. Hydroxylation reduces affinity for HI1AN and may thus indirectly modulate negative regulation of NICD. In terms of tissue distribution, in fetal tissues most abundant in spleen, brain stem and lung. Also present in most adult tissues where it is found mainly in lymphoid tissues.

The protein resides in the cell membrane. Its subcellular location is the late endosome membrane. It is found in the nucleus. In terms of biological role, functions as a receptor for membrane-bound ligands Jagged-1 (JAG1), Jagged-2 (JAG2) and Delta-1 (DLL1) to regulate cell-fate determination. Upon ligand activation through the released notch intracellular domain (NICD) it forms a transcriptional activator complex with RBPJ/RBPSUH and activates genes of the enhancer of split locus. Affects the implementation of differentiation, proliferation and apoptotic programs. Involved in angiogenesis; negatively regulates endothelial cell proliferation and migration and angiogenic sprouting. Involved in the maturation of both CD4(+) and CD8(+) cells in the thymus. Important for follicular differentiation and possibly cell fate selection within the follicle. During cerebellar development, functions as a receptor for neuronal DNER and is involved in the differentiation of Bergmann glia. Represses neuronal and myogenic differentiation. May play an essential role in postimplantation development, probably in some aspect of cell specification and/or differentiation. May be involved in mesoderm development, somite formation and neurogenesis. May enhance HIF1A function by sequestering HIF1AN away from HIF1A. Required for the THBS4 function in regulating protective astrogenesis from the subventricular zone (SVZ) niche after injury. Involved in determination of left/right symmetry by modulating the balance between motile and immotile (sensory) cilia at the left-right organiser (LRO). This is Neurogenic locus notch homolog protein 1 (NOTCH1) from Homo sapiens (Human).